Consider the following 174-residue polypeptide: Pectinesterase inhibitor 12 (174 aa).

Residues 1–20 (MKFLVSLVIFSLFLNGFATA) form the signal peptide. 2 cysteine pairs are disulfide-bonded: Cys-28–Cys-43 and Cys-100–Cys-140. The N-linked (GlcNAc...) asparagine glycan is linked to Asn-129.

Belongs to the PMEI family.

It is found in the secreted. Its subcellular location is the extracellular space. The protein localises to the apoplast. Pectin methylesterase (PME) inhibitor involved in the maintenance of cell wall integrity in response to necrotrophic pathogens. Modulates PME activity and pectin methylesterification during infection by Botrytis cinerea and contributes to resistance against the pathogen. This is Pectinesterase inhibitor 12 from Arabidopsis thaliana (Mouse-ear cress).